The primary structure comprises 131 residues: Riboflavin kinase (131 aa).

11 to 16 (GLQKAG) lines the CDP pocket. Positions 40 and 42 each coordinate Mg(2+). Residues Thr98 and Glu106 each contribute to the FMN site. CDP is bound at residue 111-114 (EKLR).

The protein belongs to the archaeal riboflavin kinase family. The cofactor is Mg(2+).

The catalysed reaction is riboflavin + CTP = CDP + FMN + H(+). It participates in cofactor biosynthesis; FMN biosynthesis; FMN from riboflavin (CTP route): step 1/1. Its function is as follows. Catalyzes the CTP-dependent phosphorylation of riboflavin (vitamin B2) to form flavin mononucleotide (FMN). This Methanosphaera stadtmanae (strain ATCC 43021 / DSM 3091 / JCM 11832 / MCB-3) protein is Riboflavin kinase.